Consider the following 371-residue polypeptide: Probable G protein-coupled receptor 85 (371 aa).

The Extracellular portion of the chain corresponds to 1–26 (MANYSHAGDHNILQNVSPLATFLKLT). N-linked (GlcNAc...) asparagine glycosylation occurs at Asn3. A helical transmembrane segment spans residues 27–47 (SLGFIIGVGVVGNLLISILLV). Residues 48–58 (KDKSLHRAPYY) lie on the Cytoplasmic side of the membrane. The helical transmembrane segment at 59–79 (FLLDLCASDILRSAICFPFVF) threads the bilayer. Residues 80 to 96 (TSVKNGSAWTYGTLTCK) are Extracellular-facing. A glycan (N-linked (GlcNAc...) asparagine) is linked at Asn84. Residues Cys95 and Cys173 are joined by a disulfide bond. Residues 97 to 117 (VIAFLGVLSCFHTAFMLFCVS) traverse the membrane as a helical segment. At 118–138 (VTRYLAIAHHRFYTKRLTFWT) the chain is on the cytoplasmic side. A helical membrane pass occupies residues 139–159 (CLAVICMVWTLSVAMAFPPVL). Topologically, residues 160–189 (DVGTYSFIREEDQCTFQHRSFRANDSLGFM) are extracellular. Asn183 carries an N-linked (GlcNAc...) asparagine glycan. A helical transmembrane segment spans residues 190–210 (LLLALILLATQLVYLKLIFFV). The Cytoplasmic segment spans residues 211-287 (HDRRKMKPVQ…FKTEKRISRM (77 aa)). Residues 288 to 308 (FYIITFFFLSLWGPYLVACYW) traverse the membrane as a helical segment. The Extracellular portion of the chain corresponds to 309 to 321 (RVFARGPVIPGGY). Residues 322-342 (LTAAVWMSFAQAGVNPFICIF) form a helical membrane-spanning segment. Residues 343-371 (SNRELRRCFSTTLLYCRKSRLPREPYCVI) are Cytoplasmic-facing.

The protein belongs to the G-protein coupled receptor 1 family.

It localises to the cell membrane. In terms of biological role, orphan receptor. The protein is Probable G protein-coupled receptor 85 (gpr85) of Danio rerio (Zebrafish).